The sequence spans 212 residues: Imidazole glycerol phosphate synthase subunit HisH (212 aa).

Positions 2-212 (QTAIIDYGMG…LTMLKNFLNW (211 aa)) constitute a Glutamine amidotransferase type-1 domain. The active-site Nucleophile is cysteine 85. Residues histidine 194 and glutamate 196 contribute to the active site.

In terms of assembly, heterodimer of HisH and HisF.

It localises to the cytoplasm. It carries out the reaction 5-[(5-phospho-1-deoxy-D-ribulos-1-ylimino)methylamino]-1-(5-phospho-beta-D-ribosyl)imidazole-4-carboxamide + L-glutamine = D-erythro-1-(imidazol-4-yl)glycerol 3-phosphate + 5-amino-1-(5-phospho-beta-D-ribosyl)imidazole-4-carboxamide + L-glutamate + H(+). It catalyses the reaction L-glutamine + H2O = L-glutamate + NH4(+). It functions in the pathway amino-acid biosynthesis; L-histidine biosynthesis; L-histidine from 5-phospho-alpha-D-ribose 1-diphosphate: step 5/9. IGPS catalyzes the conversion of PRFAR and glutamine to IGP, AICAR and glutamate. The HisH subunit catalyzes the hydrolysis of glutamine to glutamate and ammonia as part of the synthesis of IGP and AICAR. The resulting ammonia molecule is channeled to the active site of HisF. This Neisseria gonorrhoeae (strain ATCC 700825 / FA 1090) protein is Imidazole glycerol phosphate synthase subunit HisH.